A 399-amino-acid chain; its full sequence is Glutathione S-transferase LANCL1 (399 aa).

Alanine 2 bears the N-acetylalanine mark. At lysine 142 the chain carries N6-acetyllysine. Position 276 (cysteine 276) interacts with Zn(2+). Lysine 317 serves as a coordination point for glutathione. Residues cysteine 322 and histidine 323 each contribute to the Zn(2+) site. Residue 364-367 coordinates glutathione; it reads RTPD.

The protein belongs to the LanC-like protein family. Interacts with the C-terminal of STOM. Interacts with the EPS8 SH3 domain. Interaction with EPS8 is inhibited by glutathione binding. As to expression, expressed in brain.

The protein localises to the cytoplasm. Its subcellular location is the cell membrane. It catalyses the reaction RX + glutathione = an S-substituted glutathione + a halide anion + H(+). The catalysed reaction is 1-chloro-2,4-dinitrobenzene + glutathione = 2,4-dinitrophenyl-S-glutathione + chloride + H(+). Functions as a glutathione transferase. Catalyzes conjugation of the glutathione (GSH) to artificial substrates 1-chloro-2,4-dinitrobenzene (CDNB) and p-nitrophenyl acetate. Mitigates neuronal oxidative stress during normal postnatal development and in response to oxidative stresses probably through GSH antioxidant defense mechanism. May play a role in EPS8 signaling. Binds glutathione. This Bos taurus (Bovine) protein is Glutathione S-transferase LANCL1 (LANCL1).